Consider the following 515-residue polypeptide: Integrator complex subunit 14 (515 aa).

In terms of domain architecture, VWFA spans 2 to 204 (PTVVVMDVSL…KNVQSMFGKL (203 aa)). Mg(2+) contacts are provided by Ser10, Ser12, and Thr86. Lys418 is subject to N6-acetyllysine.

This sequence belongs to the Integrator subunit 14 family. In terms of assembly, component of the Integrator complex, composed of core subunits INTS1, INTS2, INTS3, INTS4, INTS5, INTS6, INTS7, INTS8, INTS9/RC74, INTS10, INTS11/CPSF3L, INTS12, INTS13, INTS14 and INTS15. The core complex associates with protein phosphatase 2A subunits PPP2CA and PPP2R1A, to form the Integrator-PP2A (INTAC) complex. INTS14 is part of the tail subcomplex, composed of INTS10, INTS13, INTS14 and INTS15.

Its subcellular location is the nucleus. In terms of biological role, component of the integrator complex, a multiprotein complex that terminates RNA polymerase II (Pol II) transcription in the promoter-proximal region of genes. The integrator complex provides a quality checkpoint during transcription elongation by driving premature transcription termination of transcripts that are unfavorably configured for transcriptional elongation: the complex terminates transcription by (1) catalyzing dephosphorylation of the C-terminal domain (CTD) of Pol II subunit POLR2A/RPB1 and SUPT5H/SPT5, (2) degrading the exiting nascent RNA transcript via endonuclease activity and (3) promoting the release of Pol II from bound DNA. The integrator complex is also involved in terminating the synthesis of non-coding Pol II transcripts, such as enhancer RNAs (eRNAs), small nuclear RNAs (snRNAs), telomerase RNAs and long non-coding RNAs (lncRNAs). Within the integrator complex, INTS14 is part of the integrator tail module that acts as a platform for the recruitment of transcription factors at promoters. In Mus musculus (Mouse), this protein is Integrator complex subunit 14.